Consider the following 798-residue polypeptide: Penicillin-binding protein 1A (798 aa).

The Cytoplasmic segment spans residues 1–9 (MIKKIITTC). The chain crosses the membrane as a helical; Signal-anchor for type II membrane protein span at residues 10–30 (MGLNNGLALFGVGLIAIAILV). Topologically, residues 31 to 798 (TYPKLPSLDS…NNRQQLDSLF (768 aa)) are periplasmic. A transglycosylase region spans residues 50–218 (LTIYSSDGQV…SAYNPIVNPE (169 aa)). E88 functions as the Proton donor; for transglycosylase activity in the catalytic mechanism. The transpeptidase stretch occupies residues 413–699 (TVVQEPLLQG…GTIAVPVWVE (287 aa)). S460 (acyl-ester intermediate; for transpeptidase activity) is an active-site residue. The tract at residues 734–798 (TSSDLALDNS…NNRQQLDSLF (65 aa)) is disordered. Polar residues predominate over residues 782–798 (LPSNTGNNNRQQLDSLF).

It in the N-terminal section; belongs to the glycosyltransferase 51 family. The protein in the C-terminal section; belongs to the transpeptidase family.

It is found in the cell inner membrane. The catalysed reaction is [GlcNAc-(1-&gt;4)-Mur2Ac(oyl-L-Ala-gamma-D-Glu-L-Lys-D-Ala-D-Ala)](n)-di-trans,octa-cis-undecaprenyl diphosphate + beta-D-GlcNAc-(1-&gt;4)-Mur2Ac(oyl-L-Ala-gamma-D-Glu-L-Lys-D-Ala-D-Ala)-di-trans,octa-cis-undecaprenyl diphosphate = [GlcNAc-(1-&gt;4)-Mur2Ac(oyl-L-Ala-gamma-D-Glu-L-Lys-D-Ala-D-Ala)](n+1)-di-trans,octa-cis-undecaprenyl diphosphate + di-trans,octa-cis-undecaprenyl diphosphate + H(+). It carries out the reaction Preferential cleavage: (Ac)2-L-Lys-D-Ala-|-D-Ala. Also transpeptidation of peptidyl-alanyl moieties that are N-acyl substituents of D-alanine.. The protein operates within cell wall biogenesis; peptidoglycan biosynthesis. Cell wall formation. Synthesis of cross-linked peptidoglycan from the lipid intermediates. The enzyme has a penicillin-insensitive transglycosylase N-terminal domain (formation of linear glycan strands) and a penicillin-sensitive transpeptidase C-terminal domain (cross-linking of the peptide subunits). This chain is Penicillin-binding protein 1A (mrcA), found in Neisseria flavescens.